Consider the following 237-residue polypeptide: Ribonuclease PH (237 aa).

Phosphate is bound by residues arginine 86 and 124-126; that span reads GTR.

This sequence belongs to the RNase PH family. Homohexameric ring arranged as a trimer of dimers.

It catalyses the reaction tRNA(n+1) + phosphate = tRNA(n) + a ribonucleoside 5'-diphosphate. Functionally, phosphorolytic 3'-5' exoribonuclease that plays an important role in tRNA 3'-end maturation. Removes nucleotide residues following the 3'-CCA terminus of tRNAs; can also add nucleotides to the ends of RNA molecules by using nucleoside diphosphates as substrates, but this may not be physiologically important. Probably plays a role in initiation of 16S rRNA degradation (leading to ribosome degradation) during starvation. In Tolumonas auensis (strain DSM 9187 / NBRC 110442 / TA 4), this protein is Ribonuclease PH.